Consider the following 38-residue polypeptide: MKVQASVKKICGSCKVVRRKGRVHIICTAEPRHKQRQG.

The protein belongs to the bacterial ribosomal protein bL36 family.

This Psychrobacter cryohalolentis (strain ATCC BAA-1226 / DSM 17306 / VKM B-2378 / K5) protein is Large ribosomal subunit protein bL36.